The following is a 194-amino-acid chain: Putative 3-methyladenine DNA glycosylase (194 aa).

It belongs to the DNA glycosylase MPG family.

The chain is Putative 3-methyladenine DNA glycosylase from Mycolicibacterium fortuitum (Mycobacterium fortuitum).